A 209-amino-acid polypeptide reads, in one-letter code: Outer-membrane lipoprotein carrier protein (209 aa).

A signal peptide spans 1 to 21 (MHRQLRYAVLATALFASTAFA).

Belongs to the LolA family. As to quaternary structure, monomer.

The protein resides in the periplasm. Participates in the translocation of lipoproteins from the inner membrane to the outer membrane. Only forms a complex with a lipoprotein if the residue after the N-terminal Cys is not an aspartate (The Asp acts as a targeting signal to indicate that the lipoprotein should stay in the inner membrane). This is Outer-membrane lipoprotein carrier protein from Xanthomonas axonopodis pv. citri (strain 306).